Reading from the N-terminus, the 46-residue chain is Light-harvesting protein B-800/850 beta 2 chain (46 aa).

Residues 2–25 (AERSLSGLTEEEAVAVHAQFQTTF) are Cytoplasmic-facing. A bacteriochlorophyll-binding residues include His-18 and His-36. A helical membrane pass occupies residues 26 to 46 (SAFIVLAAVAHVLVWVWKPWF).

Belongs to the antenna complex beta subunit family. In terms of assembly, the core complex is formed by different alpha and beta chains, binding bacteriochlorophyll molecules, and arranged most probably in tetrameric structures disposed around the reaction center.

It localises to the cell inner membrane. Functionally, antenna complexes are light-harvesting systems, which transfer the excitation energy to the reaction centers. This chain is Light-harvesting protein B-800/850 beta 2 chain (B2), found in Magnetospirillum molischianum (Rhodospirillum molischianum).